Reading from the N-terminus, the 82-residue chain is Large ribosomal subunit protein uL23 (82 aa).

The protein belongs to the universal ribosomal protein uL23 family. As to quaternary structure, part of the 50S ribosomal subunit. Contacts protein L29.

Functionally, binds to 23S rRNA. One of the proteins that surrounds the polypeptide exit tunnel on the outside of the ribosome. The chain is Large ribosomal subunit protein uL23 from Sulfolobus acidocaldarius (strain ATCC 33909 / DSM 639 / JCM 8929 / NBRC 15157 / NCIMB 11770).